The following is a 194-amino-acid chain: dCTP deaminase (194 aa).

DCTP contacts are provided by residues 110 to 115, aspartate 128, 136 to 138, tyrosine 171, lysine 178, and glutamine 182; these read RSSLAR and VLE. The active-site Proton donor/acceptor is the glutamate 138. Residues 173–194 form a disordered region; sequence SRQDAKYKNQQSAVASRINQDR. Over residues 180–194 the composition is skewed to polar residues; that stretch reads KNQQSAVASRINQDR.

It belongs to the dCTP deaminase family. In terms of assembly, homotrimer.

The catalysed reaction is dCTP + H2O + H(+) = dUTP + NH4(+). It participates in pyrimidine metabolism; dUMP biosynthesis; dUMP from dCTP (dUTP route): step 1/2. Functionally, catalyzes the deamination of dCTP to dUTP. The sequence is that of dCTP deaminase from Actinobacillus succinogenes (strain ATCC 55618 / DSM 22257 / CCUG 43843 / 130Z).